We begin with the raw amino-acid sequence, 272 residues long: Insertion element IS600 uncharacterized 31 kDa protein (272 aa).

The 164-residue stretch at 105 to 268 folds into the Integrase catalytic domain; it reads APTAPNQVWV…SPAAFREKYH (164 aa).

This Shigella sonnei protein is Insertion element IS600 uncharacterized 31 kDa protein.